Reading from the N-terminus, the 180-residue chain is NAD(P)H-quinone oxidoreductase subunit 6, chloroplastic (180 aa).

5 helical membrane-spanning segments follow: residues 10 to 30 (ILLVPLELGLILGGLEVVLLT), 32 to 52 (IIYSALSLGPVLVCISLLYIL), 57 to 77 (FVAAAQILIYVGAVNVLIVFA), 95 to 115 (VGDGITLVVCTSLFCSLITII), and 153 to 173 (FLPFELLSIILLVALVGAITI).

The protein belongs to the complex I subunit 6 family. As to quaternary structure, NDH is composed of at least 16 different subunits, 5 of which are encoded in the nucleus.

It localises to the plastid. The protein resides in the chloroplast thylakoid membrane. It carries out the reaction a plastoquinone + NADH + (n+1) H(+)(in) = a plastoquinol + NAD(+) + n H(+)(out). It catalyses the reaction a plastoquinone + NADPH + (n+1) H(+)(in) = a plastoquinol + NADP(+) + n H(+)(out). Functionally, NDH shuttles electrons from NAD(P)H:plastoquinone, via FMN and iron-sulfur (Fe-S) centers, to quinones in the photosynthetic chain and possibly in a chloroplast respiratory chain. The immediate electron acceptor for the enzyme in this species is believed to be plastoquinone. Couples the redox reaction to proton translocation, and thus conserves the redox energy in a proton gradient. This is NAD(P)H-quinone oxidoreductase subunit 6, chloroplastic (ndhG) from Cycas taitungensis (Prince sago).